A 604-amino-acid chain; its full sequence is Glutamyl-tRNA(Gln) amidotransferase subunit B, mitochondrial (604 aa).

The N-terminal 48 residues, 1 to 48 (MIRQCLSRRGAYSRYRLAARGVELAEPFHHQSSRPQGRRNWSSSPRCS), are a transit peptide targeting the mitochondrion. The interval 28–57 (FHHQSSRPQGRRNWSSSPRCSLDIRTDTPR) is disordered. A compositionally biased stretch (polar residues) spans 33-46 (SRPQGRRNWSSSPR).

This sequence belongs to the GatB/GatE family. GatB subfamily. In terms of assembly, subunit of the heterotrimeric GatCAB amidotransferase (AdT) complex, composed of A, B and C subunits.

Its subcellular location is the mitochondrion. It carries out the reaction L-glutamyl-tRNA(Gln) + L-glutamine + ATP + H2O = L-glutaminyl-tRNA(Gln) + L-glutamate + ADP + phosphate + H(+). Its function is as follows. Allows the formation of correctly charged Gln-tRNA(Gln) through the transamidation of misacylated Glu-tRNA(Gln) in the mitochondria. The reaction takes place in the presence of glutamine and ATP through an activated gamma-phospho-Glu-tRNA(Gln). The chain is Glutamyl-tRNA(Gln) amidotransferase subunit B, mitochondrial from Ajellomyces dermatitidis (strain ER-3 / ATCC MYA-2586) (Blastomyces dermatitidis).